We begin with the raw amino-acid sequence, 369 residues long: Glutamate 5-kinase (369 aa).

Lysine 9 is an ATP binding site. 3 residues coordinate substrate: serine 49, aspartate 136, and asparagine 148. ATP is bound by residues 168–169 (TD) and 210–216 (TGGMLTK). In terms of domain architecture, PUA spans 275-355 (QGEIYVDQGA…KGVVIHRDDW (81 aa)).

The protein belongs to the glutamate 5-kinase family.

The protein resides in the cytoplasm. It carries out the reaction L-glutamate + ATP = L-glutamyl 5-phosphate + ADP. The protein operates within amino-acid biosynthesis; L-proline biosynthesis; L-glutamate 5-semialdehyde from L-glutamate: step 1/2. Catalyzes the transfer of a phosphate group to glutamate to form L-glutamate 5-phosphate. The polypeptide is Glutamate 5-kinase (Streptococcus gordonii (strain Challis / ATCC 35105 / BCRC 15272 / CH1 / DL1 / V288)).